Reading from the N-terminus, the 576-residue chain is Ecdysone receptor (576 aa).

A modulating region spans residues 1 to 162; sequence MSLGARGYRR…GPAPRQQEEL (162 aa). A disordered region spans residues 87–154; sequence CTMEQQQPQP…GEARRQKKGP (68 aa). Residues 91 to 106 show a composition bias toward low complexity; that stretch reads QQQPQPQQQPQQTQPL. Residues 107–117 show a composition bias toward pro residues; that stretch reads PSMPLPMPPTT. 2 consecutive NR C4-type zinc fingers follow at residues 163 to 183 and 199 to 223; these read CLVCGDRASGYHYNALTCEGC and CKFGHACEMDIYMRRKCQECRLKKC. The segment at residues 163 to 235 is a DNA-binding region (nuclear receptor); it reads CLVCGDRASG…VGMRPECVVP (73 aa). Positions 245-269 are disordered; it reads EKKAQREKDKLPVSTTTVDDHMPPI. Residues 314–548 enclose the NR LBD domain; that stretch reads NQKSLIARLV…FLEEIWDVAD (235 aa).

The protein belongs to the nuclear hormone receptor family. NR1 subfamily.

It localises to the nucleus. Receptor for ecdysone. Binds to ecdysone response elements (ECRES). The polypeptide is Ecdysone receptor (EcR) (Heliothis virescens (Tobacco budworm moth)).